The sequence spans 634 residues: GTP-binding protein 4 (634 aa).

The residue at position 2 (alanine 2) is an N-acetylalanine. The residue at position 103 (lysine 103) is an N6-acetyllysine; alternate. Residue lysine 103 forms a Glycyl lysine isopeptide (Lys-Gly) (interchain with G-Cter in SUMO2); alternate linkage. The residue at position 122 (serine 122) is a Phosphoserine. In terms of domain architecture, OBG-type G spans 169-340 (RTLLLCGYPN…VKTEACDRLL (172 aa)). Residues 175 to 182 (GYPNVGKS), 221 to 225 (DTPGI), and 289 to 292 (NKCD) contribute to the GTP site. Lysine 332 is covalently cross-linked (Glycyl lysine isopeptide (Lys-Gly) (interchain with G-Cter in SUMO2)). Phosphoserine occurs at positions 468, 470, and 472. The tract at residues 495–517 (ILESKEKNTQGPRMPRTAKKVQR) is disordered. The residue at position 522 (lysine 522) is an N6-acetyllysine. The segment at 529-634 (VDMDDKDDAH…KRKAGKKDRR (106 aa)) is disordered. A Glycyl lysine isopeptide (Lys-Gly) (interchain with G-Cter in SUMO2) cross-link involves residue lysine 534. A compositionally biased stretch (basic residues) spans 544 to 554 (RRSRSITRKRK). Serine 558 is subject to Phosphoserine. Over residues 560–572 (PPSSVARSGSCSR) the composition is skewed to polar residues. Residues 573 to 585 (TPRDVSGLRDVKM) are compositionally biased toward basic and acidic residues. Over residues 586 to 604 (VKKAKTMMKNAQKKMNRLG) the composition is skewed to basic residues. Basic and acidic residues predominate over residues 605-618 (KKGEADRHVFDMKP). Positions 619–634 (KHLLSGKRKAGKKDRR) are enriched in basic residues.

The protein belongs to the TRAFAC class OBG-HflX-like GTPase superfamily. OBG GTPase family. NOG subfamily. Associates with pre-60S ribosomal particles. Interacts with MINAS-60 (product of an alternative open reading frame of RBM10).

It localises to the nucleus. Its subcellular location is the nucleolus. Involved in the biogenesis of the 60S ribosomal subunit. Acts as a TP53 repressor, preventing TP53 stabilization and cell cycle arrest. In Homo sapiens (Human), this protein is GTP-binding protein 4.